A 158-amino-acid chain; its full sequence is Ribosome maturation factor RimP (158 aa).

The protein belongs to the RimP family.

It localises to the cytoplasm. In terms of biological role, required for maturation of 30S ribosomal subunits. This is Ribosome maturation factor RimP from Pseudomonas putida (strain ATCC 47054 / DSM 6125 / CFBP 8728 / NCIMB 11950 / KT2440).